The sequence spans 231 residues: uncharacterized protein (231 aa).

7 helical membrane-spanning segments follow: residues 26-46 (TYSWMAAGLALTAGVAYLTAQ), 56-76 (SLRLPLMLAQLALVFVLSMFA), 84-104 (AGALFVGYAALTGLTFSALLF), 112-132 (ITAFAVSAGTFGLMSVAGFVI), 142-162 (FFLFAVLGLVVAMLVNLFVGS), 163-183 (SALSLGISMIGVFLFAGLTAY), and 206-226 (INGALALYLDFINIFLFLLNI).

The protein belongs to the BI1 family.

The protein localises to the cell membrane. This is an uncharacterized protein from Deinococcus radiodurans (strain ATCC 13939 / DSM 20539 / JCM 16871 / CCUG 27074 / LMG 4051 / NBRC 15346 / NCIMB 9279 / VKM B-1422 / R1).